The primary structure comprises 718 residues: MRQTGLASLPLKSLAVAVLLSLAGTPALAADIPANVDGARIIAADKEPGNWMSTGRTYDEQRYSPLKQISDQNVGQLGLAWSYKLDLDRGVEATPIVVDGAMYTTGPFSVVYALDARDGRLIWKYDPQSDRHRAGEACCDAVNRGVAVWKGKVYVGVLDGRLEAIDAKTGQRAWSVDTRADHKRSYTITGAPRVVNGKVVIGNGGAEFGVRGYVTAYDAETGKEAWRFYTVPGDPKLPPEGKGMEIAAKTWFGDAYVEQGGGGTAWDSFAYDPELNLLYIGVGNGSLWDPKWRSQAKGDNLFLSSIVAVNADTGEYVWHYQTTPGDAWDYTATQHMILAELPIDGKPRKVLMQAPKNGFFYVIDRATGELLSAKGIVPQSWTKGMDMKTGRPILDEENAAYWKNGKRNLVTPAFWGAHDWQPMSYNPDTGLVYIPAHIMSAYYEHIPEAPKRNPFKSMYQLGLRTGMMPEGAEGLLEMAKSWSGKLIAWDPVKQQAAWEVPYVTIFNGGTLSTAGNLVFEGSADGRVIAYAADTGEKLWEQPAASGVMAAPVTYSVDGEQYVTFMAGWGGAFSTFAGALSLRAGVQPYAQVLTYKLGGTAKLQEPAPRPDTPKPPALSNDTASIEAGAKLYDGYCSQCHGIHAVSGGVLPDLRKLTPEKHQMFLGILFGGRVPDGMPSFADAFTPEQVDQIHQYLIKRAHDLHQEGDTWKQFSAKSSH.

The first 29 residues, 1-29, serve as a signal peptide directing secretion; it reads MRQTGLASLPLKSLAVAVLLSLAGTPALA. E92 lines the pyrroloquinoline quinone pocket. A disulfide bond links C138 and C139. Residues R144, T189, and 205–206 each bind pyrroloquinoline quinone; that span reads GA. Position 207 (E207) interacts with Ca(2+). Pyrroloquinoline quinone is bound at residue T264. Residues N284 and D329 each coordinate Ca(2+). The Proton acceptor role is filled by D329. K356 contacts pyrroloquinoline quinone. W415 provides a ligand contact to substrate. Residues 419–420 and A571 each bind pyrroloquinoline quinone; that span reads DW. In terms of domain architecture, Cytochrome c spans 622-699; sequence ASIEAGAKLY…QIHQYLIKRA (78 aa). Heme c-binding residues include C635, C638, H639, and M676.

The protein belongs to the bacterial PQQ dehydrogenase family. In terms of assembly, monomer. Pyrroloquinoline quinone is required as a cofactor. The cofactor is Ca(2+). Heme c serves as cofactor.

The protein resides in the periplasm. The catalysed reaction is 2 oxidized [azurin] + a primary alcohol = 2 reduced [azurin] + an aldehyde + 2 H(+). Its activity is regulated as follows. Exhibits higher affinity for 1-butanol compared to 1,2-propanediol but inhibited by 10 mM 1-butanol. In terms of biological role, catalyzes the dye-linked oxidation of primary alcohols to the corresponding aldehydes and the (subsequent) oxidation of the aldehydes to carboxylic acids. Active with primary alcohols, glycerol, 1,2-propanediol, 1,3-propanediol but not with methanol or sugar alcohols such as D-sorbitol. The polypeptide is Quinohemoprotein alcohol dehydrogenase ADH-IIG (Pseudomonas putida (Arthrobacter siderocapsulatus)).